The primary structure comprises 428 residues: Dual-specificity RNA methyltransferase RlmN (428 aa).

A compositionally biased stretch (basic and acidic residues) spans 1–17 (MPLHRVEALGEPQDRTG). The disordered stretch occupies residues 1–44 (MPLHRVEALGEPQDRTGKTFSGRTNGPISSPLTDTERRMSIPQN). Residues 18-33 (KTFSGRTNGPISSPLT) are compositionally biased toward polar residues. Catalysis depends on glutamate 136, which acts as the Proton acceptor. The Radical SAM core domain maps to 142–381 (EDDRGALCVS…APIRMPRGRD (240 aa)). The cysteines at positions 149 and 386 are disulfide-linked. Cysteine 156, cysteine 160, and cysteine 163 together coordinate [4Fe-4S] cluster. Residues 212–213 (GE), serine 244, 266–268 (SLH), and asparagine 343 each bind S-adenosyl-L-methionine. The S-methylcysteine intermediate role is filled by cysteine 386.

It belongs to the radical SAM superfamily. RlmN family. [4Fe-4S] cluster serves as cofactor.

It is found in the cytoplasm. The enzyme catalyses adenosine(2503) in 23S rRNA + 2 reduced [2Fe-2S]-[ferredoxin] + 2 S-adenosyl-L-methionine = 2-methyladenosine(2503) in 23S rRNA + 5'-deoxyadenosine + L-methionine + 2 oxidized [2Fe-2S]-[ferredoxin] + S-adenosyl-L-homocysteine. It carries out the reaction adenosine(37) in tRNA + 2 reduced [2Fe-2S]-[ferredoxin] + 2 S-adenosyl-L-methionine = 2-methyladenosine(37) in tRNA + 5'-deoxyadenosine + L-methionine + 2 oxidized [2Fe-2S]-[ferredoxin] + S-adenosyl-L-homocysteine. Specifically methylates position 2 of adenine 2503 in 23S rRNA and position 2 of adenine 37 in tRNAs. m2A2503 modification seems to play a crucial role in the proofreading step occurring at the peptidyl transferase center and thus would serve to optimize ribosomal fidelity. The polypeptide is Dual-specificity RNA methyltransferase RlmN (Rhodospirillum rubrum (strain ATCC 11170 / ATH 1.1.1 / DSM 467 / LMG 4362 / NCIMB 8255 / S1)).